A 242-amino-acid chain; its full sequence is 4-hydroxy-tetrahydrodipicolinate reductase (242 aa).

NAD(+) is bound by residues 8–13 (GSNGRM), 75–77 (GTT), and 99–102 (ATNM). H131 (proton donor/acceptor) is an active-site residue. (S)-2,3,4,5-tetrahydrodipicolinate is bound at residue H132. The active-site Proton donor is the K135. 141–142 (GT) contacts (S)-2,3,4,5-tetrahydrodipicolinate.

The protein belongs to the DapB family.

It localises to the cytoplasm. The catalysed reaction is (S)-2,3,4,5-tetrahydrodipicolinate + NAD(+) + H2O = (2S,4S)-4-hydroxy-2,3,4,5-tetrahydrodipicolinate + NADH + H(+). It carries out the reaction (S)-2,3,4,5-tetrahydrodipicolinate + NADP(+) + H2O = (2S,4S)-4-hydroxy-2,3,4,5-tetrahydrodipicolinate + NADPH + H(+). It functions in the pathway amino-acid biosynthesis; L-lysine biosynthesis via DAP pathway; (S)-tetrahydrodipicolinate from L-aspartate: step 4/4. In terms of biological role, catalyzes the conversion of 4-hydroxy-tetrahydrodipicolinate (HTPA) to tetrahydrodipicolinate. This Campylobacter lari (strain RM2100 / D67 / ATCC BAA-1060) protein is 4-hydroxy-tetrahydrodipicolinate reductase.